The chain runs to 71 residues: Large ribosomal subunit protein bL31 (71 aa).

4 residues coordinate Zn(2+): Cys16, Cys18, Cys38, and Cys41.

It belongs to the bacterial ribosomal protein bL31 family. Type A subfamily. As to quaternary structure, part of the 50S ribosomal subunit. It depends on Zn(2+) as a cofactor.

Binds the 23S rRNA. In Francisella tularensis subsp. mediasiatica (strain FSC147), this protein is Large ribosomal subunit protein bL31.